An 878-amino-acid polypeptide reads, in one-letter code: AP-5 complex subunit beta-1 (878 aa).

Positions 234-260 (RLQPQAPSWPAAEEGEGERSLTAREHS) are disordered. The span at 250–260 (GERSLTAREHS) shows a compositional bias: basic and acidic residues.

As to quaternary structure, probably part of the adaptor protein complex 5 (AP-5), a tetramer composed of AP5B1, AP5M1, AP5S1 and AP5Z1. Interacts with ZFYVE26 and SPG11.

In terms of biological role, as part of AP-5, a probable fifth adaptor protein complex it may be involved in endosomal transport. The chain is AP-5 complex subunit beta-1 (AP5B1) from Homo sapiens (Human).